The following is a 409-amino-acid chain: Endoglucanase B (409 aa).

Residues H61, 65 to 66 (WY), Y92, and H127 each bind substrate. The active-site Proton donor is the E165. A substrate-binding site is contributed by Y228. The active-site Nucleophile is E254. Residues 260–261 (AT), W288, and 293–295 (KDE) contribute to the substrate site. Residues 326–372 (IRESATTPPSDPTPPSDPDPGEPEPDPGEPDPTPPSDPGDYPAWDPN) form a disordered region. The segment covering 334-343 (PSDPTPPSDP) has biased composition (pro residues). Residues 344-354 (DPGEPEPDPGE) show a composition bias toward acidic residues.

Belongs to the glycosyl hydrolase 5 (cellulase A) family.

The catalysed reaction is Endohydrolysis of (1-&gt;4)-beta-D-glucosidic linkages in cellulose, lichenin and cereal beta-D-glucans.. The chain is Endoglucanase B (celB) from Evansella cellulosilytica (strain ATCC 21833 / DSM 2522 / FERM P-1141 / JCM 9156 / N-4) (Bacillus cellulosilyticus).